The chain runs to 146 residues: Hemoglobin subunit beta (146 aa).

Val1 carries the N-acetylvaline; partial modification. In terms of domain architecture, Globin spans 2–146 (HLTDAEKAAV…VANALAHKYH (145 aa)). A Phosphothreonine modification is found at Thr12. The residue at position 59 (Lys59) is an N6-acetyllysine. Residue His63 participates in heme b binding. At Lys82 the chain carries N6-acetyllysine. Residue His92 coordinates heme b. S-nitrosocysteine is present on Cys93. Position 144 is an N6-acetyllysine (Lys144).

The protein belongs to the globin family. As to quaternary structure, heterotetramer of two alpha chains and two beta chains. Red blood cells.

Functionally, involved in oxygen transport from the lung to the various peripheral tissues. This Procavia capensis habessinica (Abyssinian hyrax) protein is Hemoglobin subunit beta (HBB).